Consider the following 183-residue polypeptide: SsrA-binding protein (183 aa).

The interval 1–27 (MAKKATLVDHGAAKGKKKAQSKVSKKN) is disordered. Residues 13–27 (AKGKKKAQSKVSKKN) show a composition bias toward basic residues.

Belongs to the SmpB family.

Its subcellular location is the cytoplasm. In terms of biological role, required for rescue of stalled ribosomes mediated by trans-translation. Binds to transfer-messenger RNA (tmRNA), required for stable association of tmRNA with ribosomes. tmRNA and SmpB together mimic tRNA shape, replacing the anticodon stem-loop with SmpB. tmRNA is encoded by the ssrA gene; the 2 termini fold to resemble tRNA(Ala) and it encodes a 'tag peptide', a short internal open reading frame. During trans-translation Ala-aminoacylated tmRNA acts like a tRNA, entering the A-site of stalled ribosomes, displacing the stalled mRNA. The ribosome then switches to translate the ORF on the tmRNA; the nascent peptide is terminated with the 'tag peptide' encoded by the tmRNA and targeted for degradation. The ribosome is freed to recommence translation, which seems to be the essential function of trans-translation. This chain is SsrA-binding protein, found in Corynebacterium kroppenstedtii (strain DSM 44385 / JCM 11950 / CIP 105744 / CCUG 35717).